Here is a 363-residue protein sequence, read N- to C-terminus: Fructose-bisphosphate aldolase C (363 aa).

A Phosphotyrosine modification is found at Y5. Phosphoserine is present on residues S36, S39, and S45. Residue R56 coordinates substrate. An N6-acetyllysine modification is found at K111. A substrate-binding site is contributed by K147. The active-site Proton acceptor is E188. The active-site Schiff-base intermediate with dihydroxyacetone-P is the K230.

The protein belongs to the class I fructose-bisphosphate aldolase family. As to quaternary structure, homotetramer. Interacts with ATP6V1E1. Expressed exclusively in Purkinje cells in bands running from anterior to posterior across most of the cerebellum. Expressed at higher levels in the brains of BSE-infected animals.

The enzyme catalyses beta-D-fructose 1,6-bisphosphate = D-glyceraldehyde 3-phosphate + dihydroxyacetone phosphate. The protein operates within carbohydrate degradation; glycolysis; D-glyceraldehyde 3-phosphate and glycerone phosphate from D-glucose: step 4/4. The polypeptide is Fructose-bisphosphate aldolase C (Aldoc) (Mus musculus (Mouse)).